Reading from the N-terminus, the 179-residue chain is Large ribosomal subunit protein uL6 (179 aa).

It belongs to the universal ribosomal protein uL6 family. As to quaternary structure, part of the 50S ribosomal subunit.

Its function is as follows. This protein binds to the 23S rRNA, and is important in its secondary structure. It is located near the subunit interface in the base of the L7/L12 stalk, and near the tRNA binding site of the peptidyltransferase center. This chain is Large ribosomal subunit protein uL6, found in Clostridium novyi (strain NT).